Reading from the N-terminus, the 412-residue chain is NADH-quinone oxidoreductase subunit D (412 aa).

This sequence belongs to the complex I 49 kDa subunit family. As to quaternary structure, NDH-1 is composed of 14 different subunits. Subunits NuoB, C, D, E, F, and G constitute the peripheral sector of the complex.

It is found in the cell inner membrane. The catalysed reaction is a quinone + NADH + 5 H(+)(in) = a quinol + NAD(+) + 4 H(+)(out). Functionally, NDH-1 shuttles electrons from NADH, via FMN and iron-sulfur (Fe-S) centers, to quinones in the respiratory chain. The immediate electron acceptor for the enzyme in this species is believed to be ubiquinone. Couples the redox reaction to proton translocation (for every two electrons transferred, four hydrogen ions are translocated across the cytoplasmic membrane), and thus conserves the redox energy in a proton gradient. The chain is NADH-quinone oxidoreductase subunit D from Sulfurimonas denitrificans (strain ATCC 33889 / DSM 1251) (Thiomicrospira denitrificans (strain ATCC 33889 / DSM 1251)).